Here is a 2206-residue protein sequence, read N- to C-terminus: Genome polyprotein (2206 aa).

Glycine 2 carries N-myristoyl glycine; by host lipidation. Over glycine 2–glutamine 1517 the chain is Cytoplasmic. Amphipathic alpha-helix regions lie at residues glycine 579–glutamine 599 and glycine 579–leucine 603. Active-site for protease 2A activity residues include histidine 898 and aspartate 916. Zn(2+) is bound by residues cysteine 933 and cysteine 935. The For protease 2A activity role is filled by cysteine 987. Zn(2+) contacts are provided by cysteine 993 and histidine 995. Residues glycine 1125–glutamine 1197 are membrane-binding. The interval glycine 1125 to threonine 1263 is oligomerization. Residues serine 1146–serine 1150 are RNA-binding. Residues glutamate 1229–asparagine 1385 form the SF3 helicase domain. Position 1253 to 1260 (glycine 1253 to serine 1260) interacts with ATP. Cysteine 1393, cysteine 1396, cysteine 1405, and cysteine 1410 together coordinate Zn(2+). Residues cysteine 1393–cysteine 1410 form a C4-type zinc finger. The tract at residues glutamate 1437–isoleucine 1444 is RNA-binding. Residues methionine 1448 to glutamine 1453 form an oligomerization region. An intramembrane segment occupies alanine 1518 to tyrosine 1533. Residues lysine 1534 to phenylalanine 2206 are Cytoplasmic-facing. Position 1543 is an O-(5'-phospho-RNA)-tyrosine (tyrosine 1543). The region spanning glycine 1563–phenylalanine 1741 is the Peptidase C3 domain. Active-site for protease 3C activity residues include histidine 1602, glutamate 1633, and cysteine 1709. In terms of domain architecture, RdRp catalytic spans glutamate 1972 to leucine 2087. Mg(2+) is bound by residues aspartate 1978 and aspartate 2073.

This sequence belongs to the picornaviruses polyprotein family. As to quaternary structure, interacts with capsid protein VP1 and capsid protein VP3 to form heterotrimeric protomers. In terms of assembly, interacts with capsid protein VP0, and capsid protein VP3 to form heterotrimeric protomers. Interacts with human PVR. Five protomers subsequently associate to form pentamers which serve as building blocks for the capsid. Interacts with capsid protein VP2, capsid protein VP3 and capsid protein VP4 following cleavage of capsid protein VP0. Interacts with capsid protein VP1 and capsid protein VP3 in the mature capsid. As to quaternary structure, interacts with capsid protein VP0 and capsid protein VP1 to form heterotrimeric protomers. Five protomers subsequently associate to form pentamers which serve as building blocks for the capsid. Interacts with capsid protein VP4 in the mature capsid. Interacts with protein 2C; this interaction may be important for virion morphogenesis. In terms of assembly, interacts with capsid protein VP1 and capsid protein VP3. Homodimer. As to quaternary structure, homohexamer; forms a hexameric ring structure with 6-fold symmetry characteristic of AAA+ ATPases. Interacts (via N-terminus) with host RTN3 (via reticulon domain); this interaction is important for viral replication. Interacts with capsid protein VP3; this interaction may be important for virion morphogenesis. In terms of assembly, interacts with protein 3CD. Homodimer. Interacts with host GBF1. Interacts (via GOLD domain) with host ACBD3 (via GOLD domain); this interaction allows the formation of a viral protein 3A/ACBD3 heterotetramer with a 2:2 stoichiometry, which will stimulate the recruitment of host PI4KB in order to synthesize PI4P at the viral RNA replication sites. As to quaternary structure, interacts with RNA-directed RNA polymerase. In terms of assembly, interacts with protein 3AB and with RNA-directed RNA polymerase. Interacts with Viral protein genome-linked and with protein 3CD. It depends on Mg(2+) as a cofactor. In terms of processing, specific enzymatic cleavages in vivo by the viral proteases yield processing intermediates and the mature proteins. Myristoylation is required for the formation of pentamers during virus assembly. Further assembly of 12 pentamers and a molecule of genomic RNA generates the provirion. Post-translationally, during virion maturation, immature virions are rendered infectious following cleavage of VP0 into VP4 and VP2. This maturation seems to be an autocatalytic event triggered by the presence of RNA in the capsid and it is followed by a conformational change infectious virion. In terms of processing, myristoylation is required during RNA encapsidation and formation of the mature virus particle. VPg is uridylylated by the polymerase into VPg-pUpU. This acts as a nucleotide-peptide primer for the genomic RNA replication.

The protein localises to the virion. Its subcellular location is the host cytoplasm. The protein resides in the host cytoplasmic vesicle membrane. It is found in the host nucleus. The enzyme catalyses a ribonucleoside 5'-triphosphate + H2O = a ribonucleoside 5'-diphosphate + phosphate + H(+). It catalyses the reaction Selective cleavage of Tyr-|-Gly bond in the picornavirus polyprotein.. It carries out the reaction RNA(n) + a ribonucleoside 5'-triphosphate = RNA(n+1) + diphosphate. The catalysed reaction is Selective cleavage of Gln-|-Gly bond in the poliovirus polyprotein. In other picornavirus reactions Glu may be substituted for Gln, and Ser or Thr for Gly.. Replication or transcription is subject to high level of random mutations by the nucleotide analog ribavirin. Its function is as follows. Forms an icosahedral capsid of pseudo T=3 symmetry with capsid proteins VP2 and VP3. The capsid is 300 Angstroms in diameter, composed of 60 copies of each capsid protein and enclosing the viral positive strand RNA genome. Capsid protein VP1 mainly forms the vertices of the capsid. Capsid protein VP1 interacts with host cell receptor PVR to provide virion attachment to target host cells. This attachment induces virion internalization predominantly through clathrin- and caveolin-independent endocytosis in Hela cells and through caveolin-mediated endocytosis in brain microvascular endothelial cells. Tyrosine kinases are probably involved in the entry process. Virus binding to PVR induces increased junctional permeability and rearrangement of junctional proteins. Modulation of endothelial tight junctions, as well as cytolytic infection of endothelial cells themselves, may result in loss of endothelial integrity which may help the virus to reach the CNS. After binding to its receptor, the capsid undergoes conformational changes. Capsid protein VP1 N-terminus (that contains an amphipathic alpha-helix) and capsid protein VP4 are externalized. Together, they shape a pore in the host membrane through which viral genome is translocated to host cell cytoplasm. Functionally, forms an icosahedral capsid of pseudo T=3 symmetry with capsid proteins VP2 and VP3. The capsid is 300 Angstroms in diameter, composed of 60 copies of each capsid protein and enclosing the viral positive strand RNA genome. In terms of biological role, lies on the inner surface of the capsid shell. After binding to the host receptor, the capsid undergoes conformational changes. Capsid protein VP4 is released, Capsid protein VP1 N-terminus is externalized, and together, they shape a pore in the host membrane through which the viral genome is translocated into the host cell cytoplasm. Component of immature procapsids, which is cleaved into capsid proteins VP4 and VP2 after maturation. Allows the capsid to remain inactive before the maturation step. Its function is as follows. Cysteine protease that cleaves viral polyprotein and specific host proteins. It is responsible for the autocatalytic cleavage between the P1 and P2 regions, which is the first cleavage occurring in the polyprotein. Also cleaves the host translation initiation factor EIF4G1, in order to shut down the capped cellular mRNA translation. Inhibits the host nucleus-cytoplasm protein and RNA trafficking by cleaving host members of the nuclear pores including NUP98, NUP62 and NUP153. Counteracts stress granule formation probably by antagonizing its assembly or promoting its dissassembly. Cleaves and inhibits host IFIH1/MDA5, thereby inhibiting the type-I IFN production and the establishment of the antiviral state. Cleaves and inhibits host MAVS, thereby inhibiting the type-I IFN production and the establishment of the antiviral state. Functionally, plays an essential role in the virus replication cycle by acting as a viroporin. Creates a pore in the host endoplasmic reticulum and as a consequence releases Ca2+ in the cytoplasm of infected cell. In turn, high levels of cytoplasmic calcium may trigger membrane trafficking and transport of viral ER-associated proteins to viroplasms, sites of viral genome replication. In terms of biological role, induces and associates with structural rearrangements of intracellular membranes. Displays RNA-binding, nucleotide binding and NTPase activities. May play a role in virion morphogenesis and viral RNA encapsidation by interacting with the capsid protein VP3. Localizes the viral replication complex to the surface of membranous vesicles. Together with protein 3CD binds the Cis-Active RNA Element (CRE) which is involved in RNA synthesis initiation. Acts as a cofactor to stimulate the activity of 3D polymerase, maybe through a nucleid acid chaperone activity. Its function is as follows. Localizes the viral replication complex to the surface of membranous vesicles. It inhibits host cell endoplasmic reticulum-to-Golgi apparatus transport and causes the disassembly of the Golgi complex, possibly through GBF1 interaction. This would result in depletion of MHC, trail receptors and IFN receptors at the host cell surface. Plays an essential role in viral RNA replication by recruiting ACBD3 and PI4KB at the viral replication sites, thereby allowing the formation of the rearranged membranous structures where viral replication takes place. Functionally, acts as a primer for viral RNA replication and remains covalently bound to viral genomic RNA. VPg is uridylylated prior to priming replication into VPg-pUpU. The oriI viral genomic sequence may act as a template for this. The VPg-pUpU is then used as primer on the genomic RNA poly(A) by the RNA-dependent RNA polymerase to replicate the viral genome. During genome replication, the VPg-RNA linkage is removed by the host TDP2, thereby accelerating replication. During the late stage of the replication cycle, host TDP2 is excluded from sites of viral RNA synthesis and encapsidation, allowing for the generation of progeny virions. In terms of biological role, involved in the viral replication complex and viral polypeptide maturation. It exhibits protease activity with a specificity and catalytic efficiency that is different from protease 3C. Protein 3CD lacks polymerase activity. Protein 3CD binds to the 5'UTR of the viral genome. Major viral protease that mediates proteolytic processing of the polyprotein. Cleaves host EIF5B, contributing to host translation shutoff. Also cleaves host PABPC1, contributing to host translation shutoff. Cleaves host RIGI and thus contributes to the inhibition of type I interferon production. Cleaves host NLRP1, triggers host N-glycine-mediated degradation of the autoinhibitory NLRP1 N-terminal fragment. Inhibits the integrated stress response (ISR) in the infected cell by cleaving host G3BP1. Stress granule formation is thus inhibited, which allows protein synthesis and viral replication. Its function is as follows. Replicates the viral genomic RNA on the surface of intracellular membranes. May form linear arrays of subunits that propagate along a strong head-to-tail interaction called interface-I. Covalently attaches UMP to a tyrosine of VPg, which is used to prime RNA synthesis. The positive stranded RNA genome is first replicated at virus induced membranous vesicles, creating a dsRNA genomic replication form. This dsRNA is then used as template to synthesize positive stranded RNA genomes. ss(+)RNA genomes are either translated, replicated or encapsidated. The protein is Genome polyprotein of Poliovirus type 3 (strains P3/Leon/37 and P3/Leon 12A[1]B).